The primary structure comprises 337 residues: MLEKFERYPLTFGPTHIEKLERLSEHLGGKVQLYAKREDCNSGLAFGGNKLRKLEYIIPDAIASNADTLVSIGGVQSNHTRMIAAVAAKIGFKCRLVQESWVPHEDAVYDRVGNILLSRIMGADVQMVDEGFDIGIRQSWEEAIEDVKAKGGKPYPIPAGASVHKYGGLGYVGFAEEVRVQEEELGFKFDYIVVCTVTGSTHAGMTVGFAKDGRERQVIGIDASFTPAQTKAQVLEIARRTAELVELGRELSSDDIVLIEDYAYPVYGVPSDETKEAIRLCARLEGMITDPVYEGKSMQGMIDLVKKGYFPEGSKVLYAHLGGAPAINGYAYTFRNG.

The residue at position 50 (K50) is an N6-(pyridoxal phosphate)lysine. Catalysis depends on S77, which acts as the Nucleophile.

The protein belongs to the ACC deaminase/D-cysteine desulfhydrase family. As to quaternary structure, homotrimer. The cofactor is pyridoxal 5'-phosphate.

The catalysed reaction is 1-aminocyclopropane-1-carboxylate + H2O = 2-oxobutanoate + NH4(+). Catalyzes a cyclopropane ring-opening reaction, the irreversible conversion of 1-aminocyclopropane-1-carboxylate (ACC) to ammonia and alpha-ketobutyrate. Allows growth on ACC as a nitrogen source. The sequence is that of 1-aminocyclopropane-1-carboxylate deaminase from Rhizobium rhizogenes (strain K84 / ATCC BAA-868) (Agrobacterium radiobacter).